The chain runs to 125 residues: MPTINQLIRKPRQAPVEKSKVPALKACPQRRGVCTRVYTTTPKKPNSALRKVCKVKLTSGFEVISYIGGEGHNLQEHSVVLVRGGRVKDLPGVRYHTVRGSLDTAGVKDRKQSRSKYGAKRPKKA.

Aspartate 89 is subject to 3-methylthioaspartic acid. The tract at residues 101 to 125 (SLDTAGVKDRKQSRSKYGAKRPKKA) is disordered. Residues 113-125 (SRSKYGAKRPKKA) show a composition bias toward basic residues.

Belongs to the universal ribosomal protein uS12 family. As to quaternary structure, part of the 30S ribosomal subunit. Contacts proteins S8 and S17. May interact with IF1 in the 30S initiation complex.

In terms of biological role, with S4 and S5 plays an important role in translational accuracy. Its function is as follows. Interacts with and stabilizes bases of the 16S rRNA that are involved in tRNA selection in the A site and with the mRNA backbone. Located at the interface of the 30S and 50S subunits, it traverses the body of the 30S subunit contacting proteins on the other side and probably holding the rRNA structure together. The combined cluster of proteins S8, S12 and S17 appears to hold together the shoulder and platform of the 30S subunit. The protein is Small ribosomal subunit protein uS12 of Thiobacillus denitrificans (strain ATCC 25259 / T1).